Reading from the N-terminus, the 433-residue chain is Enolase (433 aa).

(2R)-2-phosphoglycerate is bound at residue Gln167. Glu209 acts as the Proton donor in catalysis. Residues Asp246, Glu287, and Asp314 each coordinate Mg(2+). Residues Lys339, Arg368, Ser369, and Lys390 each coordinate (2R)-2-phosphoglycerate. The active-site Proton acceptor is the Lys339.

This sequence belongs to the enolase family. Requires Mg(2+) as cofactor.

It localises to the cytoplasm. The protein localises to the secreted. Its subcellular location is the cell surface. It carries out the reaction (2R)-2-phosphoglycerate = phosphoenolpyruvate + H2O. The protein operates within carbohydrate degradation; glycolysis; pyruvate from D-glyceraldehyde 3-phosphate: step 4/5. Its function is as follows. Catalyzes the reversible conversion of 2-phosphoglycerate (2-PG) into phosphoenolpyruvate (PEP). It is essential for the degradation of carbohydrates via glycolysis. The sequence is that of Enolase from Prochlorococcus marinus (strain NATL2A).